The following is a 388-amino-acid chain: P2X purinoceptor 4 (388 aa).

Over 1–33 (MAGCCSVLGSFLFEYDTPRIVLIRSRKVGLMNR) the chain is Cytoplasmic. A helical transmembrane segment spans residues 34–54 (VVQLLILAYVIGWVFVWEKGY). Over 55–338 (QETDSVVSSV…KFDIIPTMIN (284 aa)) the chain is Extracellular. The ATP site is built by Lys67 and Lys69. Residues Lys67 and Lys69 each contribute to the CTP site. N-linked (GlcNAc...) asparagine glycosylation is found at Asn75, Asn110, Asn131, Asn153, and Asn184. 3 disulfide bridges follow: Cys116–Cys165, Cys126–Cys149, and Cys132–Cys159. The ATP site is built by Thr186 and Leu188. Thr186 is a CTP binding site. Asn199 and Asn208 each carry an N-linked (GlcNAc...) asparagine glycan. 2 cysteine pairs are disulfide-bonded: Cys217–Cys227 and Cys261–Cys270. ATP contacts are provided by Asn293, Arg295, and Lys313. Positions 293, 295, and 313 each coordinate CTP. Residues 339-359 (VGSGLALLGVATVLCDVIVLY) form a helical membrane-spanning segment. At 360-388 (CMKKRYYYRDKKYKYVEDYEQGLSGEMNQ) the chain is on the cytoplasmic side.

It belongs to the P2X receptor family. In terms of assembly, functional P2RXs are organized as homomeric and heteromeric trimers. Functional P2XRs are organized as homomeric and heteromeric trimers. Forms heterotrimer with P2RX1. Interacts with P2RX7 (via C-terminus); this interaction is functional only in the presence of ATP. Forms heterotrimer with P2RX4; functional differences between homomeric P2RX4 and P2RX4/6 heterotrimer are minor. Interacts with AP1M2.

It localises to the cell membrane. It is found in the lysosome membrane. The enzyme catalyses K(+)(in) = K(+)(out). It catalyses the reaction Na(+)(in) = Na(+)(out). The catalysed reaction is Ca(2+)(in) = Ca(2+)(out). Activated by ATP. pH-dependent and inhibited by acidic pH. In terms of biological role, ATP-gated nonselective transmembrane cation channel permeable to potassium, sodium and calcium. CTP, but not GTP or UTP, functions as a weak affinity agonist for P2RX4. Activated by extracellularly released ATP, it plays multiple role in immunity and central nervous system physiology. Plays a key role in initial steps of T-cell activation and Ca(2+) microdomain formation. Also participates in basal T-cell activity without TCR/CD3 stimulation. Promotes the differentiation and activation of Th17 cells via expression of retinoic acid-related orphan receptor C/RORC. Upon activation, drives microglia motility via the PI3K/Akt pathway. Could also function as an ATP-gated cation channel of lysosomal membranes. The chain is P2X purinoceptor 4 (P2rx4) from Mus musculus (Mouse).